The primary structure comprises 626 residues: MSEQHNQPGFTDQSLIRNFCIIAHIDHGKSTVADRILQLSGIVPEREMRDRFLDRMDIEQERGITIKSQAVRVPWSYDGQEYTLGMIDTPGHVDFTYEVSRALAACEGAVLLVDATQGIEAQTLSNLYMAIDHDLTIIPVLNKIDLPSAEPDKHAEEIASLIGCEPSDVLRVSGKTGEGVRELLDRIVVDVPAPTGDPDADARALIFDSVYDSYRGIVTYIRMVDGELRSREKLHMMGVGTTYDPIEIGVISPDMMPTRALGAGEVGYVITGAKDVSQSKVGDTITSTAHPATEPLPGYRDPQPMVYAGLFPIDNAQFPELREALDKLKLNDAALIYEPETSVALGFGFRCGFLGLLHMEIVSERLSREFGLDLISTAPNVPYEVTAEDGTVHRVTNPSEFPDGKIKRIVEPMVAADIITPKEFIGAVMDLCQEHRGTMSTMEYISTDRVEMHYRIPLAEIVFDFFDQLKSRTKGYASLDYHDDGEEAADLVKVDILIQGEKIDAFSAIVHRDKAYSYGVMMTKKLRELIPRQQFEIPIQAAIGSRIIARENIRALRKDVLAKCYGGDITRKRKLLEKQKAGKKRMKMLGHVEVPQEAFVAALSTGEGGNDRDTKDKIRAAQKSEG.

The region spanning 14 to 195 is the tr-type G domain; that stretch reads SLIRNFCIIA…RIVVDVPAPT (182 aa). GTP contacts are provided by residues 26–31 and 142–145; these read DHGKST and NKID. Residues 603-626 are disordered; it reads LSTGEGGNDRDTKDKIRAAQKSEG. Basic and acidic residues predominate over residues 609–626; that stretch reads GNDRDTKDKIRAAQKSEG.

It belongs to the TRAFAC class translation factor GTPase superfamily. Classic translation factor GTPase family. LepA subfamily.

The protein resides in the cell membrane. It catalyses the reaction GTP + H2O = GDP + phosphate + H(+). In terms of biological role, required for accurate and efficient protein synthesis under certain stress conditions. May act as a fidelity factor of the translation reaction, by catalyzing a one-codon backward translocation of tRNAs on improperly translocated ribosomes. Back-translocation proceeds from a post-translocation (POST) complex to a pre-translocation (PRE) complex, thus giving elongation factor G a second chance to translocate the tRNAs correctly. Binds to ribosomes in a GTP-dependent manner. The sequence is that of Elongation factor 4 from Bifidobacterium animalis subsp. lactis (strain AD011).